Here is a 287-residue protein sequence, read N- to C-terminus: Eukaryotic translation initiation factor 3 subunit F (287 aa).

Residues 12–142 form the MPN domain; that stretch reads VRVHPVVLFQ…IKAYVCVSLG (131 aa).

It belongs to the eIF-3 subunit F family. In terms of assembly, component of the eukaryotic translation initiation factor 3 (eIF-3) complex.

The protein localises to the cytoplasm. In terms of biological role, component of the eukaryotic translation initiation factor 3 (eIF-3) complex, which is involved in protein synthesis of a specialized repertoire of mRNAs and, together with other initiation factors, stimulates binding of mRNA and methionyl-tRNAi to the 40S ribosome. The eIF-3 complex specifically targets and initiates translation of a subset of mRNAs involved in cell proliferation. The protein is Eukaryotic translation initiation factor 3 subunit F of Anopheles gambiae (African malaria mosquito).